The following is a 209-amino-acid chain: Large ribosomal subunit protein uL3 (209 aa).

It belongs to the universal ribosomal protein uL3 family. Part of the 50S ribosomal subunit. Forms a cluster with proteins L14 and L19.

One of the primary rRNA binding proteins, it binds directly near the 3'-end of the 23S rRNA, where it nucleates assembly of the 50S subunit. The chain is Large ribosomal subunit protein uL3 from Clostridium botulinum (strain Okra / Type B1).